A 335-amino-acid chain; its full sequence is Holliday junction branch migration complex subunit RuvB (335 aa).

Residues alanine 4–tyrosine 184 are large ATPase domain (RuvB-L). ATP-binding positions include isoleucine 23, arginine 24, glycine 65, lysine 68, threonine 69, threonine 70, glutamate 131–tyrosine 133, arginine 174, tyrosine 184, and arginine 221. A Mg(2+)-binding site is contributed by threonine 69. The interval serine 185–aspartate 255 is small ATPAse domain (RuvB-S). The tract at residues glutamine 258–glutamate 335 is head domain (RuvB-H). DNA-binding residues include arginine 294, arginine 313, and arginine 318.

This sequence belongs to the RuvB family. In terms of assembly, homohexamer. Forms an RuvA(8)-RuvB(12)-Holliday junction (HJ) complex. HJ DNA is sandwiched between 2 RuvA tetramers; dsDNA enters through RuvA and exits via RuvB. An RuvB hexamer assembles on each DNA strand where it exits the tetramer. Each RuvB hexamer is contacted by two RuvA subunits (via domain III) on 2 adjacent RuvB subunits; this complex drives branch migration. In the full resolvosome a probable DNA-RuvA(4)-RuvB(12)-RuvC(2) complex forms which resolves the HJ.

Its subcellular location is the cytoplasm. The catalysed reaction is ATP + H2O = ADP + phosphate + H(+). Its function is as follows. The RuvA-RuvB-RuvC complex processes Holliday junction (HJ) DNA during genetic recombination and DNA repair, while the RuvA-RuvB complex plays an important role in the rescue of blocked DNA replication forks via replication fork reversal (RFR). RuvA specifically binds to HJ cruciform DNA, conferring on it an open structure. The RuvB hexamer acts as an ATP-dependent pump, pulling dsDNA into and through the RuvAB complex. RuvB forms 2 homohexamers on either side of HJ DNA bound by 1 or 2 RuvA tetramers; 4 subunits per hexamer contact DNA at a time. Coordinated motions by a converter formed by DNA-disengaged RuvB subunits stimulates ATP hydrolysis and nucleotide exchange. Immobilization of the converter enables RuvB to convert the ATP-contained energy into a lever motion, pulling 2 nucleotides of DNA out of the RuvA tetramer per ATP hydrolyzed, thus driving DNA branch migration. The RuvB motors rotate together with the DNA substrate, which together with the progressing nucleotide cycle form the mechanistic basis for DNA recombination by continuous HJ branch migration. Branch migration allows RuvC to scan DNA until it finds its consensus sequence, where it cleaves and resolves cruciform DNA. This Mannheimia succiniciproducens (strain KCTC 0769BP / MBEL55E) protein is Holliday junction branch migration complex subunit RuvB.